A 375-amino-acid chain; its full sequence is Succinyl-diaminopimelate desuccinylase (375 aa).

His-66 is a Zn(2+) binding site. Asp-68 is an active-site residue. Residue Asp-99 participates in Zn(2+) binding. Catalysis depends on Glu-133, which acts as the Proton acceptor. 3 residues coordinate Zn(2+): Glu-134, Glu-162, and His-348.

It belongs to the peptidase M20A family. DapE subfamily. Homodimer. Zn(2+) is required as a cofactor. Co(2+) serves as cofactor.

It catalyses the reaction N-succinyl-(2S,6S)-2,6-diaminopimelate + H2O = (2S,6S)-2,6-diaminopimelate + succinate. The protein operates within amino-acid biosynthesis; L-lysine biosynthesis via DAP pathway; LL-2,6-diaminopimelate from (S)-tetrahydrodipicolinate (succinylase route): step 3/3. Functionally, catalyzes the hydrolysis of N-succinyl-L,L-diaminopimelic acid (SDAP), forming succinate and LL-2,6-diaminopimelate (DAP), an intermediate involved in the bacterial biosynthesis of lysine and meso-diaminopimelic acid, an essential component of bacterial cell walls. The chain is Succinyl-diaminopimelate desuccinylase from Stenotrophomonas maltophilia (strain K279a).